Here is a 309-residue protein sequence, read N- to C-terminus: Serine/threonine-protein phosphatase 2A catalytic subunit alpha isoform (309 aa).

Mn(2+)-binding residues include Asp57, His59, Asp85, and Asn117. The Zn(2+) site is built by Asp57, His59, and Asp85. The Fe(3+) site is built by Asp85 and Asn117. The active-site Proton donor is His118. His167 and His241 together coordinate Mn(2+). 2 residues coordinate Fe(3+): His167 and His241. Tyr307 is modified (phosphotyrosine). Leucine methyl ester is present on Leu309.

Belongs to the PPP phosphatase family. PP-1 subfamily. PP2A consists of a common heterodimeric core enzyme composed of PPP2CA, a 36 kDa catalytic subunit (subunit C), and PPP2R1A, a 65 kDa constant regulatory subunit (PR65 or subunit A), that associates with a variety of regulatory subunits. Proteins that associate with the core dimer include three families of regulatory subunits B (the R2/B/PR55/B55, R3/B''/PR72/PR130/PR59 and R5/B'/B56 families), the 48 kDa variable regulatory subunit, viral proteins, and cell signaling molecules. Interacts with the PP2A A subunit PPP2R1A. Interacts with the regulatory subunit PPP2R2A. Interacts (via C-terminus) with PTPA. Interacts with NXN; the interaction is direct. Interacts with KCTD20. Interacts with BTBD10. Interacts with SGO1 and SGO2. Interacts with RAF1. Interaction with IGBP1 protects unassembled PPP2CA from degradative ubiquitination. Interacts with GSK3B (via C2 domain). Interacts with MFHAS1; retains PPP2CA into the cytoplasm and excludes it from the nucleus. Interacts with PABIR1/FAM122A. Interacts with ADCY8; interaction is phosphatase activity-dependent; antagonizes interaction between ADCY8 and calmodulin. Interacts with CRTC3 (when phosphorylated at 'Ser-391'). Interacts with SPRY2; the interaction is inhibited by TESK1 interaction with SPRY2, possibly by vesicular sequestration of SPRY2. Interacts with TRAF3IP3. Interacts with AMBRA1 (via PxP motifs); enhancing interaction between PPP2CA and MYC or FOXO3. Forms a complex with AMBRA1 and BECN1; AMBRA1 and BECN1 components of the complex regulate MYC stability via different pathways. Part of the core of STRIPAK complexes composed of PP2A catalytic and scaffolding subunits, the striatins (PP2A regulatory subunits), the striatin-associated proteins MOB4, STRIP1 and STRIP2, PDCD10 and members of the STE20 kinases, such as STK24 and STK26. Phosphatase component of the Integrator-PP2A (INTAC) complex, composed of the Integrator core complex and protein phosphatase 2A subunits PPP2CA and PPP2R1A. It depends on Mn(2+) as a cofactor. Fe(3+) is required as a cofactor. Zn(2+) serves as cofactor. Post-translationally, reversibly methyl esterified on Leu-309 by leucine carboxyl methyltransferase 1 (Lcmt1) and protein phosphatase methylesterase 1 (Ppme1). Carboxyl methylation influences the affinity of the catalytic subunit for the different regulatory subunits, thereby modulating the PP2A holoenzyme's substrate specificity, enzyme activity and cellular localization. Phosphorylation of either threonine (by autophosphorylation-activated protein kinase) or tyrosine results in inactivation of the phosphatase. Auto-dephosphorylation has been suggested as a mechanism for reactivation. In terms of processing, polyubiquitinated, leading to its degradation by the proteasome.

The protein localises to the cytoplasm. The protein resides in the nucleus. Its subcellular location is the chromosome. It is found in the centromere. It localises to the cytoskeleton. The protein localises to the spindle pole. It catalyses the reaction O-phospho-L-seryl-[protein] + H2O = L-seryl-[protein] + phosphate. The catalysed reaction is O-phospho-L-threonyl-[protein] + H2O = L-threonyl-[protein] + phosphate. With respect to regulation, inhibited by the interaction between PPP2R2A and ARPP19; this inhibition is enhanced when ARPP19 is phosphorylated. Inhibited by the interaction between PPP2R2A and PABIR1/FAM122A. Its function is as follows. Catalytic subunit of protein phosphatase 2A (PP2A), a serine/threonine phosphatase involved in the regulation of a wide variety of enzymes, signal transduction pathways, and cellular events. PP2A is the major phosphatase for microtubule-associated proteins (MAPs). PP2A can modulate the activity of phosphorylase B kinase casein kinase 2, mitogen-stimulated S6 kinase, and MAP-2 kinase. Cooperates with SGO2 to protect centromeric cohesin from separase-mediated cleavage in oocytes specifically during meiosis I. Can dephosphorylate various proteins, such as AXIN1, p53/TP53, PIM3, WEE1. Activates RAF1 by dephosphorylating it at 'Ser-259'. Mediates dephosphorylation of WEE1, preventing its ubiquitin-mediated proteolysis, increasing WEE1 protein levels, and promoting the G2/M checkpoint. Mediates dephosphorylation of MYC; promoting its ubiquitin-mediated proteolysis: interaction with AMBRA1 enhances interaction between PPP2CA and MYC. Mediates dephosphorylation of FOXO3; promoting its stabilization: interaction with AMBRA1 enhances interaction between PPP2CA and FOXO3. Catalyzes dephosphorylation of the pyrin domain of NLRP3, promoting assembly of the NLRP3 inflammasome. Together with RACK1 adapter, mediates dephosphorylation of AKT1 at 'Ser-473', preventing AKT1 activation and AKT-mTOR signaling pathway. Dephosphorylation of AKT1 is essential for regulatory T-cells (Treg) homeostasis and stability. Catalyzes dephosphorylation of PIM3, promotinh PIM3 ubiquitination and proteasomal degradation. Part of the striatin-interacting phosphatase and kinase (STRIPAK) complexes. STRIPAK complexes have critical roles in protein (de)phosphorylation and are regulators of multiple signaling pathways including Hippo, MAPK, nuclear receptor and cytoskeleton remodeling. Different types of STRIPAK complexes are involved in a variety of biological processes such as cell growth, differentiation, apoptosis, metabolism and immune regulation. Key mediator of a quality checkpoint during transcription elongation as part of the Integrator-PP2A (INTAC) complex. The INTAC complex drives premature transcription termination of transcripts that are unfavorably configured for transcriptional elongation: within the INTAC complex, PPP2CA catalyzes dephosphorylation of the C-terminal domain (CTD) of Pol II subunit POLR2A/RPB1 and SUPT5H/SPT5, thereby preventing transcriptional elongation. This Rattus norvegicus (Rat) protein is Serine/threonine-protein phosphatase 2A catalytic subunit alpha isoform (Ppp2ca).